The primary structure comprises 453 residues: GTPase Der (453 aa).

EngA-type G domains lie at 3–167 (FTLA…PAQT) and 187–360 (IKVA…AVWN). GTP-binding positions include 9–16 (GRPNVGKS), 56–60 (DTAGL), 119–122 (NKSE), 193–200 (GRPNAGKS), 240–244 (DTAGL), and 305–308 (NKSD). The 85-residue stretch at 361–445 (TRIPTNPLNR…PIRLTLREKG (85 aa)) folds into the KH-like domain.

Belongs to the TRAFAC class TrmE-Era-EngA-EngB-Septin-like GTPase superfamily. EngA (Der) GTPase family. Associates with the 50S ribosomal subunit.

Functionally, GTPase that plays an essential role in the late steps of ribosome biogenesis. This chain is GTPase Der, found in Azorhizobium caulinodans (strain ATCC 43989 / DSM 5975 / JCM 20966 / LMG 6465 / NBRC 14845 / NCIMB 13405 / ORS 571).